Reading from the N-terminus, the 254-residue chain is NAD kinase (254 aa).

The Proton acceptor role is filled by aspartate 44. NAD(+)-binding positions include 44-45 (DG), 114-115 (NE), aspartate 144, alanine 152, 155-160 (TAYNYS), and alanine 179.

This sequence belongs to the NAD kinase family. It depends on a divalent metal cation as a cofactor.

It is found in the cytoplasm. The enzyme catalyses NAD(+) + ATP = ADP + NADP(+) + H(+). Its function is as follows. Involved in the regulation of the intracellular balance of NAD and NADP, and is a key enzyme in the biosynthesis of NADP. Catalyzes specifically the phosphorylation on 2'-hydroxyl of the adenosine moiety of NAD to yield NADP. This chain is NAD kinase, found in Cereibacter sphaeroides (strain ATCC 17025 / ATH 2.4.3) (Rhodobacter sphaeroides).